A 473-amino-acid chain; its full sequence is Calcium uptake protein 1, mitochondrial (473 aa).

The transit peptide at M1–L33 directs the protein to the mitochondrion. Positions S61–V101 are disordered. Positions S66–A79 are enriched in basic and acidic residues. The span at D80 to P91 shows a compositional bias: acidic residues. Positions K96–K107 are polybasic region. The tract at residues K123–R126 is k/R-ring. The 36-residue stretch at T215–Q250 folds into the EF-hand 1 domain. 5 residues coordinate Ca(2+): D228, N230, D232, E234, and E239. The tract at residues R256–R260 is k/R-ring. An EF-hand 2 domain is found at L405–R440. D418, D420, N422, E424, and E429 together coordinate Ca(2+). The interval R452–Q462 is C-helix region.

This sequence belongs to the MICU1 family. MICU1 subfamily. Heterodimer; disulfide-linked; heterodimerizes with micu2. Component of the uniplex complex.

It is found in the mitochondrion intermembrane space. It localises to the mitochondrion inner membrane. In terms of biological role, calcium sensor of the mitochondrial calcium uniporter (mcu) channel, which senses calcium level via its EF-hand domains. micu1 and micu2 form a disulfide-linked heterodimer that stimulates and inhibits MCU activity, depending on the concentration of calcium. At low calcium levels, micu1 occludes the pore of the MCU channel, preventing mitochondrial calcium uptake. At higher calcium levels, calcium-binding to micu1 and micu2 induces a conformational change that weakens mcu-micu1 interactions and moves the micu1-micu2 heterodimer away from the pore, allowing calcium permeation through the mcu channel. Also required to protect against manganese toxicity by preventing manganese uptake by mcu. In Xenopus tropicalis (Western clawed frog), this protein is Calcium uptake protein 1, mitochondrial (micu1).